A 4493-amino-acid chain; its full sequence is Mucin-17 (4493 aa).

Residues 1–25 (MPRPGTMALCLLTLVLSLLPPQAAA) form the signal peptide. Topologically, residues 26-4393 (EQDLSVNRAV…QGTQKSLVYG (4368 aa)) are extracellular. The span at 88–105 (NPEMTSIESSVTSDTPGV) shows a compositional bias: polar residues. 4 disordered regions span residues 88–159 (NPEM…SISS), 188–223 (LTTS…SMPA), 248–277 (TISA…STPL), and 306–344 (VITS…ASTM). Low complexity predominate over residues 106 to 146 (SSTRMTPTESRTTSESTSDSTTLFPSSTEDTSSPTTPEGTD). Residues 148-159 (PMSTPSEESISS) are compositionally biased toward polar residues. 57 repeat units span residues 185–245 (STPL…EIST), 246–300 (PVTI…TTPA), 301–361 (ATNI…PVDT), 362–418 (STLV…TIPV), 420–477 (SKTF…TTPV), 479–538 (SKTQ…PVDT), 539–597 (STPV…PADS), 598–654 (NTFV…TTPV), 656–715 (SNTP…PVDT), 716–774 (STPV…PLDT), 775–831 (STHI…TTPV), 833–892 (SNSP…PVDT), 893–951 (STPV…PVDT), 952–1010 (STPV…PVDS), 1011–1069 (NTPL…PADT), 1070–1121 (STPV…ASTL), 1122–1187 (STTP…PVDS), 1188–1246 (KTQV…PVDT), 1247–1305 (STPV…PVDT), 1306–1364 (KGPV…PVDN), 1365–1423 (STPV…PVDT), 1424–1482 (STPG…PVDS), 1483–1541 (NSPV…PAVT), 1542–1600 (STPV…PIDS), 1601–1656 (KTQV…TTPV), 1658–1717 (SNSP…PVDN), 1718–1776 (STPV…PIDT), 1777–1835 (STPV…PVDS), 1836–1895 (NSPV…AVTS), 1896–1951 (TPVT…TTLA), 1953–2012 (TRTP…PVDT), 2013–2071 (STPA…PVDS), 2072–2127 (KTQV…TTPV), 2129–2188 (SNSP…PVDT), 2189–2247 (STPV…PVDT), 2248–2306 (STPV…PVDS), 2307–2365 (NTPF…PADT), 2366–2424 (STPV…PVDT), 2425–2483 (STPV…PVDT), 2484–2540 (STPM…TTPV), 2542–2601 (SNSP…PVDT), 2602–2653 (SIPV…ASTL), 2654–2719 (STTP…PVDT), 2720–2770 (STPV…EAST), 2772–2837 (STTA…PVDT), 2838–2896 (STPV…PVDT), 2897–2955 (SIPV…PVDT), 2956–3014 (RTPV…PADT), 3015–3073 (STPV…PVDS), 3074–3132 (NSPV…PVDT), 3133–3191 (STPV…PVDT), 3192–3247 (STPV…TTPV), 3249–3308 (SNTP…PADT), 3309–3367 (STPV…PVDT), 3368–3426 (STPV…PVDS), 3427–3485 (NTLV…PVDT), and 3486–3544 (STPV…PVDS). A 59 X approximate tandem repeats region spans residues 185-3727 (STPLTTSTQA…SVVTSTPVTT (3543 aa)). The segment covering 188-210 (LTTSTQASSSPTTPESTTIPKST) has biased composition (low complexity). Positions 211-223 (NSEGSTPLTSMPA) are enriched in polar residues. Residues 308-323 (TSTEASSSPTTAEGTS) are compositionally biased toward low complexity. Polar residues predominate over residues 324 to 344 (IPTSTYTEGSTPLTSTPASTM). Over residues 425 to 441 (TTASEASSSPTTAEDTS) the composition is skewed to low complexity. Disordered regions lie at residues 425–629 (TTAS…ERGT), 644–868 (SEAS…TPLT), 886–1104 (STTP…TPLT), 1116–1163 (SEAS…TPLA), 1175–1279 (SEAN…GSTL), and 1296–1338 (STLL…GRTP). Residues 442–483 (IATSTPSEGSTPLTSMPVSTTPVASSEASNLSTTPVDSKTQV) are compositionally biased toward polar residues. N471 carries an N-linked (GlcNAc...) asparagine glycan. A compositionally biased stretch (low complexity) spans 484–497 (TTSTEASSSPPTAE). A compositionally biased stretch (polar residues) spans 498-528 (VNSMPTSTPSEGSTPLTSMSVSTMPVASSEA). Low complexity-rich tracts occupy residues 529–573 (STLS…TPLT) and 584–618 (SSEA…EGTS). 2 stretches are compositionally biased toward polar residues: residues 619 to 629 (MPTSTYSERGT) and 644 to 660 (SEAS…NTPV). The span at 661-677 (TTSTEATSSSTTAEGTS) shows a compositional bias: low complexity. Residues 678-705 (MPTSTYTEGSTPLTSMPVNTTLVASSEA) are compositionally biased toward polar residues. N696 is a glycosylation site (N-linked (GlcNAc...) asparagine). Residues 706 to 733 (STLSTTPVDTSTPVTTSTEASSSPTTAD) show a composition bias toward low complexity. Polar residues predominate over residues 737-754 (MPTSTPSEGSTPLTSMPV). Over residues 755-776 (SKTLLTSSEASTLSTTPLDTST) the composition is skewed to low complexity. The span at 777–832 (HITTSTEASCSPTTTEGTSMPISTPSEGSPLLTSIPVSITPVTSPEASTLSTTPVD) shows a compositional bias: polar residues. Over residues 833–849 (SNSPVTTSTEVSSSPTP) the composition is skewed to low complexity. Residues 854–868 (SMPTSTYSEGRTPLT) show a composition bias toward polar residues. The segment covering 886–900 (STTPVDTSTPVTNST) has biased composition (low complexity). N898 carries an N-linked (GlcNAc...) asparagine glycan. The segment covering 901–944 (EARSSPTTSEGTSMPTSTPGEGSTPLTSMPDSTTPVVSSEARTL) has biased composition (polar residues). Residues 945 to 972 (SATPVDTSTPVTTSTEATSSPTTAEGTS) are compositionally biased toward low complexity. The segment covering 973–1011 (IPTSTPSEGTTPLTSTPVSHTLVANSEASTLSTTPVDSN) has biased composition (polar residues). A compositionally biased stretch (low complexity) spans 1012-1021 (TPLTTSTEAS). The span at 1029-1062 (GTSMPTSTPSEGSTPLTRMPVSTTMVASSETSTL) shows a compositional bias: polar residues. Positions 1063 to 1090 (STTPADTSTPVTTYSQASSSSTTADGTS) are enriched in low complexity. 2 stretches are compositionally biased toward polar residues: residues 1091-1104 (MPTS…TPLT) and 1116-1132 (SEAS…SIPV). Over residues 1133–1149 (TTSTEASSSPTTAEGTS) the composition is skewed to low complexity. Polar residues-rich tracts occupy residues 1175–1198 (SEAN…TEAS) and 1205–1222 (EVTS…TPLT). Positions 1237–1279 (STLSTSPVDTSTPVTTSAETSSSPTTAEGTSLPTSTTSEGSTL) are enriched in low complexity. Composition is skewed to polar residues over residues 1310–1320 (VTSNEVSSSPT) and 1326–1338 (SMPT…GRTP). N1345 carries an N-linked (GlcNAc...) asparagine glycan. The segment covering 1360–1394 (TPVDNSTPVTTSTEACSSPTTSEGTSMPNSNPSEG) has biased composition (polar residues). 20 disordered regions span residues 1360 to 1516 (TPVD…STAL), 1537 to 1575 (TPAV…STPL), 1590 to 1930 (ANTL…PLTS), 1947 to 2163 (STTL…RTPL), 2177 to 2281 (AIST…TTPL), 2295 to 2501 (EVST…TTAE), 2524 to 2630 (TTPV…TPSE), 2647 to 2693 (SSEA…RSTP), 2709 to 2751 (ASTL…DGST), 2765 to 2853 (SSEA…SPTT), 2879 to 2925 (TPVA…TPSE), 2942 to 3167 (GSEA…TPLT), 3182 to 3577 (STLS…GSSS), 3589 to 3635 (TSSE…EVST), 3667 to 3701 (ITST…TMPV), 3785 to 3812 (MTTA…TSER), 3829 to 3849 (PSEA…LLTS), 3892 to 3914 (ASIA…DTAS), 3965 to 3988 (VITS…FSTT), and 4008 to 4129 (STAP…TPTV). Composition is skewed to low complexity over residues 1395–1415 (TTPL…EAST) and 1423–1442 (TSTP…TAEG). Over residues 1461-1483 (PVSNTPVANSEASTLSTTPVDSN) the composition is skewed to polar residues. Low complexity predominate over residues 1484–1499 (SPVVTSTAVSSSPTPA). Residues 1504–1516 (IAISTPSEGSTAL) show a composition bias toward polar residues. A compositionally biased stretch (low complexity) spans 1537–1547 (TPAVTSTPVTT). Polar residues-rich tracts occupy residues 1548 to 1575 (YSQA…STPL) and 1590 to 1604 (ANTL…KTQV). Over residues 1605-1620 (TASTEASSSTTAEGSS) the composition is skewed to low complexity. Composition is skewed to polar residues over residues 1621 to 1673 (MTIS…SSPT) and 1679 to 1775 (SMPT…TPID). The span at 1776–1797 (TSTPVTTSTEATSSPTTAEGTS) shows a compositional bias: low complexity. The span at 1798–1836 (IPTSTLSEGMTPLTSTPVSHTLVANSEASTLSTTPVDSN) shows a compositional bias: polar residues. The segment covering 1837–1852 (SPVVTSTAVSSSPTPA) has biased composition (low complexity). Residues 1856 to 1883 (SIATSTPSEGSTALTSIPVSTTTVASSE) show a composition bias toward polar residues. Residues 1884-1900 (TNTLSTTPAVTSTPVTT) are compositionally biased toward low complexity. 2 stretches are compositionally biased toward polar residues: residues 1901–1921 (YAQV…TSTP) and 1947–1976 (STTL…TSMP). Low complexity predominate over residues 1984 to 2033 (STPLTSMPLSTTLVVSSEASTLSTTPVDTSTPATTSTEGSSSPTTAGGTS). Composition is skewed to polar residues over residues 2034–2043 (IQTSTPSERT) and 2051–2077 (VSTT…QVTN). N2077 is a glycosylation site (N-linked (GlcNAc...) asparagine). Over residues 2078-2091 (STEASSSATAEGSS) the composition is skewed to low complexity. Over residues 2092–2156 (MTISAPSEGS…EGTSMQTSTY (65 aa)) the composition is skewed to polar residues. The segment covering 2177–2196 (AISTLSTTPVDTSTPVTNST) has biased composition (low complexity). A glycan (N-linked (GlcNAc...) asparagine) is linked at N2194. Polar residues predominate over residues 2197 to 2240 (EARSSPTTSEGTSMPTSTPSEGSTPFTSMPVSTMPVVTSEASTL). Low complexity predominate over residues 2241 to 2268 (SATPVDTSTPVTTSTEATSSPTTAEGTS). Composition is skewed to polar residues over residues 2269-2281 (IPTS…TTPL) and 2295-2307 (EVST…VDSN). Over residues 2308–2317 (TPFTTSTEAS) the composition is skewed to low complexity. A compositionally biased stretch (polar residues) spans 2325–2358 (GTSMPTSTSSEGNTPLTRMPVSTTMVASFETSTL). A compositionally biased stretch (low complexity) spans 2359-2371 (STTPADTSTPVTT). Over residues 2372-2395 (YSQAGSSPTTADDTSMPTSTYSEG) the composition is skewed to polar residues. Composition is skewed to low complexity over residues 2396-2445 (STPL…EGTS) and 2462-2499 (PVST…SPTT). The span at 2524-2547 (TTPVASPEASTLSTTPVDSNSPVV) shows a compositional bias: polar residues. Over residues 2548–2563 (TSTEISSSATSAEGTS) the composition is skewed to low complexity. Polar residues predominate over residues 2564 to 2576 (MPTSTYSEGSTPL). Residues 2586-2617 (LASSEASTLSTTPVDTSIPVTTSTETSSSPTT) are compositionally biased toward low complexity. The segment covering 2618–2628 (AKDTSMPISTP) has biased composition (polar residues). A compositionally biased stretch (low complexity) spans 2654-2681 (STTPVDTRTLVTTSTGTSSSPTTAEGSS). Positions 2682–2693 (MPTSTPGERSTP) are enriched in polar residues. Residues 2710 to 2740 (STLSTTPVDTSTPVTTSAEASSSPTTAEGTS) are compositionally biased toward low complexity. The segment covering 2741–2751 (MRISTPSDGST) has biased composition (polar residues). 2 stretches are compositionally biased toward low complexity: residues 2765-2816 (SSEA…TSMP) and 2829-2853 (TLST…SPTT). The segment covering 2879 to 2900 (TPVASSEASTLSTTPVDTSIPV) has biased composition (polar residues). Low complexity-rich tracts occupy residues 2901 to 2917 (TTST…EGTS) and 2950 to 2976 (TTPV…EGTS). The segment covering 2988–3009 (PLTSMSVSTMPVASSEASTLSR) has biased composition (polar residues). The segment covering 3010–3031 (TPADTSTPVTTSTEASSSPTTA) has biased composition (low complexity). Over residues 3037–3057 (PISTPSEGSTPLTSIPVSTTP) the composition is skewed to polar residues. Low complexity-rich tracts occupy residues 3073–3089 (SNSP…SPTP) and 3104–3140 (STPL…TTST). Residues 3141–3166 (EAHSSPTTSEGTSMPTSTPSEGSTPL) are compositionally biased toward polar residues. Positions 3185-3211 (SATPVDTSTPVTTSTEATSSTTAEGTS) are enriched in low complexity. Residues 3212 to 3253 (IPTSTPSEGMTPLTSVPVSNTPVASSEASILSTTPVDSNTPL) are compositionally biased toward polar residues. Positions 3254–3267 (TTSTEASSSPPTAE) are enriched in low complexity. A compositionally biased stretch (polar residues) spans 3268-3288 (GTSMPTSTPSEGSTPLTSMPV). Positions 3289–3314 (STTTVASSETSTLSTTPADTSTPVTT) are enriched in low complexity. The segment covering 3329 to 3357 (SMPTSTYSEGSTPLTNMSFSTTPVVSSEA) has biased composition (polar residues). N-linked (GlcNAc...) asparagine glycosylation occurs at N3344. The segment covering 3358–3375 (STLSTTPVDTSTPVTTST) has biased composition (low complexity). The segment covering 3376 to 3401 (EASLSPTTAEGTSIPTSSPSEGTTPL) has biased composition (polar residues). The segment covering 3405-3414 (PVSTTPVVSS) has biased composition (low complexity). Composition is skewed to polar residues over residues 3415–3441 (EVNT…SSPT) and 3447–3475 (SLPT…SSEA). The segment covering 3476 to 3501 (STLSTTPVDTSTPVTTSSPTNSSPTT) has biased composition (low complexity). 2 stretches are compositionally biased toward polar residues: residues 3502 to 3549 (AEVT…TFVT) and 3558 to 3571 (PATL…MSTP). The segment covering 3589 to 3616 (TSSEASTPSTPSVDRSTPVTTSTQSNST) has biased composition (low complexity). A run of 2 repeats spans residues 3604 to 3662 (STPV…PVDT) and 3663 to 3727 (STPV…PVTT). Residues 3626 to 3635 (PMSTPSEVST) are compositionally biased toward polar residues. Over residues 3667–3679 (ITSTQVSSSPVTP) the composition is skewed to low complexity. Polar residues-rich tracts occupy residues 3690–3701 (SEGSTPLTTMPV) and 3785–3806 (MTTA…TMPM). Low complexity-rich tracts occupy residues 3967–3988 (TSTE…FSTT), 4008–4083 (STAP…SSTT), and 4090–4129 (TTMT…TPTV). N4116 carries N-linked (GlcNAc...) asparagine glycosylation. Residues 4131–4170 (RTTTCFGDGCQNTASRCKNGGTWDGLKCQCPNLYYGELCE) enclose the EGF-like domain. 3 disulfide bridges follow: C4135/C4147, C4140/C4158, and C4160/C4169. Positions 4184–4291 (ISAQMELTVT…QQIMINDICS (108 aa)) constitute an SEA domain. Residues N4205, N4236, N4267, N4297, and N4305 are each glycosylated (N-linked (GlcNAc...) asparagine). A helical transmembrane segment spans residues 4394–4414 (LVGAGVVLMLIILVALLMLVF). The Cytoplasmic segment spans residues 4415 to 4493 (RSKREVKRQK…QRPQVMTTSF (79 aa)).

Interacts via its C-terminus with PDZK1 and this interaction appears important for proper localization. Probably cleaved within the SEA domain. In terms of processing, N-glycosylated. Contains high mannose and complex-type glycans. The forms containing the complex type glycans localize to the cell surface. Not O-glycosylated. Expressed almost exclusively in the intestine. Expression is especially high in both the duodenum and transverse colon. Expressed in mature absorptive cells of the small intestinal villi. No expression is detected in goblet cells. Highly expressed in pancreatic adenocarcinoma tissue (at protein level). Expression is not detectable in normal pancreas, in pancreatitis or in cell lines derived from other cancers.

It localises to the cell membrane. Its subcellular location is the secreted. Probably plays a role in maintaining homeostasis on mucosal surfaces. The chain is Mucin-17 (MUC17) from Homo sapiens (Human).